The chain runs to 272 residues: HMP-PP phosphatase (272 aa).

Asp8 (nucleophile) is an active-site residue. Mg(2+) is bound by residues Asp8, Asp10, and Asp212.

This sequence belongs to the HAD-like hydrolase superfamily. Cof family. Requires Mg(2+) as cofactor.

It catalyses the reaction 4-amino-2-methyl-5-(diphosphooxymethyl)pyrimidine + H2O = 4-amino-2-methyl-5-(phosphooxymethyl)pyrimidine + phosphate + H(+). In terms of biological role, catalyzes the hydrolysis of 4-amino-2-methyl-5-hydroxymethylpyrimidine pyrophosphate (HMP-PP) to 4-amino-2-methyl-5-hydroxymethylpyrimidine phosphate (HMP-P). The polypeptide is HMP-PP phosphatase (Escherichia fergusonii (strain ATCC 35469 / DSM 13698 / CCUG 18766 / IAM 14443 / JCM 21226 / LMG 7866 / NBRC 102419 / NCTC 12128 / CDC 0568-73)).